Reading from the N-terminus, the 125-residue chain is Small ribosomal subunit protein uS11 (125 aa).

A disordered region spans residues 101–125 (KDVKDVTPTPHNGTRPPKKILKREK). The span at 116–125 (PPKKILKREK) shows a compositional bias: basic residues.

It belongs to the universal ribosomal protein uS11 family. As to quaternary structure, part of the 30S ribosomal subunit. Interacts with proteins S7 and S18. Binds to IF-3.

In terms of biological role, located on the platform of the 30S subunit, it bridges several disparate RNA helices of the 16S rRNA. Forms part of the Shine-Dalgarno cleft in the 70S ribosome. This chain is Small ribosomal subunit protein uS11, found in Mycoplasma sp.